Reading from the N-terminus, the 181-residue chain is Peptidyl-tRNA hydrolase (181 aa).

Y14 contributes to the tRNA binding site. Residue H19 is the Proton acceptor of the active site. Residues Y62, N64, and N108 each coordinate tRNA.

Belongs to the PTH family. In terms of assembly, monomer.

Its subcellular location is the cytoplasm. The enzyme catalyses an N-acyl-L-alpha-aminoacyl-tRNA + H2O = an N-acyl-L-amino acid + a tRNA + H(+). Its function is as follows. Hydrolyzes ribosome-free peptidyl-tRNAs (with 1 or more amino acids incorporated), which drop off the ribosome during protein synthesis, or as a result of ribosome stalling. Catalyzes the release of premature peptidyl moieties from peptidyl-tRNA molecules trapped in stalled 50S ribosomal subunits, and thus maintains levels of free tRNAs and 50S ribosomes. This Campylobacter jejuni subsp. doylei (strain ATCC BAA-1458 / RM4099 / 269.97) protein is Peptidyl-tRNA hydrolase.